A 109-amino-acid chain; its full sequence is Spermidine export protein MdtI (109 aa).

4 consecutive transmembrane segments (helical) span residues Phe6–Leu26, Trp36–Val56, Ala64–Phe84, and Leu88–Leu108.

It belongs to the drug/metabolite transporter (DMT) superfamily. Small multidrug resistance (SMR) (TC 2.A.7.1) family. MdtI subfamily. In terms of assembly, forms a complex with MdtJ.

The protein localises to the cell inner membrane. Functionally, catalyzes the excretion of spermidine. This is Spermidine export protein MdtI from Yersinia pseudotuberculosis serotype I (strain IP32953).